A 341-amino-acid chain; its full sequence is 3-dehydroquinate synthase (341 aa).

NAD(+)-binding positions include Asp-54–Lys-59, Gly-88–Asp-92, Thr-112–Thr-113, Lys-125, Lys-133, and Thr-151–Thr-154. 3 residues coordinate Zn(2+): Glu-166, His-220, and His-236.

It belongs to the sugar phosphate cyclases superfamily. Dehydroquinate synthase family. NAD(+) serves as cofactor. It depends on Co(2+) as a cofactor. The cofactor is Zn(2+).

The protein resides in the cytoplasm. The catalysed reaction is 7-phospho-2-dehydro-3-deoxy-D-arabino-heptonate = 3-dehydroquinate + phosphate. Its pathway is metabolic intermediate biosynthesis; chorismate biosynthesis; chorismate from D-erythrose 4-phosphate and phosphoenolpyruvate: step 2/7. Its function is as follows. Catalyzes the conversion of 3-deoxy-D-arabino-heptulosonate 7-phosphate (DAHP) to dehydroquinate (DHQ). The sequence is that of 3-dehydroquinate synthase from Thermococcus kodakarensis (strain ATCC BAA-918 / JCM 12380 / KOD1) (Pyrococcus kodakaraensis (strain KOD1)).